We begin with the raw amino-acid sequence, 156 residues long: 6,7-dimethyl-8-ribityllumazine synthase (156 aa).

5-amino-6-(D-ribitylamino)uracil contacts are provided by residues Phe-23, 57-59 (AFE), and 81-83 (AVI). (2S)-2-hydroxy-3-oxobutyl phosphate is bound at residue 86-87 (ST). His-89 acts as the Proton donor in catalysis. Residue Phe-114 participates in 5-amino-6-(D-ribitylamino)uracil binding. Residue Arg-128 participates in (2S)-2-hydroxy-3-oxobutyl phosphate binding.

It belongs to the DMRL synthase family.

The enzyme catalyses (2S)-2-hydroxy-3-oxobutyl phosphate + 5-amino-6-(D-ribitylamino)uracil = 6,7-dimethyl-8-(1-D-ribityl)lumazine + phosphate + 2 H2O + H(+). It participates in cofactor biosynthesis; riboflavin biosynthesis; riboflavin from 2-hydroxy-3-oxobutyl phosphate and 5-amino-6-(D-ribitylamino)uracil: step 1/2. Functionally, catalyzes the formation of 6,7-dimethyl-8-ribityllumazine by condensation of 5-amino-6-(D-ribitylamino)uracil with 3,4-dihydroxy-2-butanone 4-phosphate. This is the penultimate step in the biosynthesis of riboflavin. In Sulfurospirillum multivorans (Dehalospirillum multivorans), this protein is 6,7-dimethyl-8-ribityllumazine synthase.